The primary structure comprises 329 residues: 4-hydroxythreonine-4-phosphate dehydrogenase (329 aa).

Positions 136 and 137 each coordinate substrate. Positions 166, 211, and 266 each coordinate a divalent metal cation. Positions 274, 283, and 292 each coordinate substrate.

Belongs to the PdxA family. As to quaternary structure, homodimer. It depends on Zn(2+) as a cofactor. Mg(2+) is required as a cofactor. The cofactor is Co(2+).

The protein localises to the cytoplasm. It carries out the reaction 4-(phosphooxy)-L-threonine + NAD(+) = 3-amino-2-oxopropyl phosphate + CO2 + NADH. Its pathway is cofactor biosynthesis; pyridoxine 5'-phosphate biosynthesis; pyridoxine 5'-phosphate from D-erythrose 4-phosphate: step 4/5. Catalyzes the NAD(P)-dependent oxidation of 4-(phosphooxy)-L-threonine (HTP) into 2-amino-3-oxo-4-(phosphooxy)butyric acid which spontaneously decarboxylates to form 3-amino-2-oxopropyl phosphate (AHAP). The chain is 4-hydroxythreonine-4-phosphate dehydrogenase from Escherichia coli O17:K52:H18 (strain UMN026 / ExPEC).